A 348-amino-acid polypeptide reads, in one-letter code: Centromere protein L (348 aa).

This sequence belongs to the CENP-L/IML3 family.

The protein resides in the nucleus. Its subcellular location is the chromosome. It localises to the centromere. Its function is as follows. Probable component of a centromeric complex involved in assembly of kinetochore proteins, mitotic progression and chromosome segregation. The sequence is that of Centromere protein L (cenpl) from Xenopus tropicalis (Western clawed frog).